A 410-amino-acid polypeptide reads, in one-letter code: Arginine deiminase (410 aa).

The active-site Amidino-cysteine intermediate is cysteine 400.

Belongs to the arginine deiminase family.

It localises to the cytoplasm. It carries out the reaction L-arginine + H2O = L-citrulline + NH4(+). Its pathway is amino-acid degradation; L-arginine degradation via ADI pathway; carbamoyl phosphate from L-arginine: step 1/2. The protein is Arginine deiminase of Bacillus cereus (strain G9842).